We begin with the raw amino-acid sequence, 291 residues long: Phosphatidylglycerol--prolipoprotein diacylglyceryl transferase (291 aa).

The next 4 helical transmembrane spans lie at 24-44, 64-84, 100-120, and 125-145; these read WYAL…RALL, FILW…VLFY, WNGG…VILF, and GLPI…GLFL. Arg147 contributes to the a 1,2-diacyl-sn-glycero-3-phospho-(1'-sn-glycerol) binding site. Transmembrane regions (helical) follow at residues 187 to 207, 211 to 231, and 247 to 267; these read AALE…LGAL, GLVL…AEFF, and MGML…YAAW.

Belongs to the Lgt family.

The protein localises to the cell inner membrane. It catalyses the reaction L-cysteinyl-[prolipoprotein] + a 1,2-diacyl-sn-glycero-3-phospho-(1'-sn-glycerol) = an S-1,2-diacyl-sn-glyceryl-L-cysteinyl-[prolipoprotein] + sn-glycerol 1-phosphate + H(+). The protein operates within protein modification; lipoprotein biosynthesis (diacylglyceryl transfer). Functionally, catalyzes the transfer of the diacylglyceryl group from phosphatidylglycerol to the sulfhydryl group of the N-terminal cysteine of a prolipoprotein, the first step in the formation of mature lipoproteins. This chain is Phosphatidylglycerol--prolipoprotein diacylglyceryl transferase, found in Nitrobacter winogradskyi (strain ATCC 25391 / DSM 10237 / CIP 104748 / NCIMB 11846 / Nb-255).